Here is a 118-residue protein sequence, read N- to C-terminus: UPF0344 protein YisL (118 aa).

4 helical membrane-spanning segments follow: residues 4–24, 33–53, 62–82, and 93–113; these read LHIT…SLYS, ITHM…AELF, EYAG…MLLI, and LWVG…HLPI.

Belongs to the UPF0344 family.

It is found in the cell membrane. In Bacillus subtilis (strain 168), this protein is UPF0344 protein YisL (yisL).